A 501-amino-acid polypeptide reads, in one-letter code: Endosomal/lysosomal proton channel TMEM175 (501 aa).

The disordered stretch occupies residues 1 to 20 (MAAPRAATPGPGGGARKPEL). Over 1-31 (MAAPRAATPGPGGGARKPELDLELGSSTQTS) the chain is Cytoplasmic. A helical transmembrane segment spans residues 32-54 (HRLLAYSDALLSIIATVMILPVA). A RxxxFSD motif 1 motif is present at residues 33–39 (RLLAYSD). Topologically, residues 55-75 (HTKIHPDQKLGESVQQLLLTK) are lumenal. Residues 56–61 (TKIHPD) form a short helix H1-1 region. The short helix H2-1 stretch occupies residues 63–69 (KLGESVQ). A helical transmembrane segment spans residues 76-98 (IAVYLMTFLIVTVAWAAHVRLFQ). The Cytoplasmic segment spans residues 99 to 104 (VIELID). Residues 105–126 (DVLALLNLACMMIITFLPYTFS) traverse the membrane as a helical segment. Residues 127–136 (LMASFPGVPF) lie on the Lumenal side of the membrane. Residues 137-158 (GIFLFSVCAVVIGLIQAVIVVY) form a helical membrane-spanning segment. The Cytoplasmic segment spans residues 159 to 182 (GFYHPHLLNQQIQVSENQNFYKRH). A helical membrane pass occupies residues 183–203 (ILKIILRGPALCFLAAIFSFF). Over 204 to 208 (FIPLS) the chain is Lumenal. A helical transmembrane segment spans residues 209–228 (YLLLGLVIVFPHLSRFITWC). Residues 229–257 (KTKIVGHRDEEEASYSLETFSFYLSEPLS) lie on the Cytoplasmic side of the membrane. Residues 258-282 (KERVEAFSDGVYAIVATLLILDICE) traverse the membrane as a helical segment. Positions 260-266 (RVEAFSD) match the RxxxFSD motif 2 motif. The Lumenal portion of the chain corresponds to 283-309 (DNVPDPREVGEKFHGSLLEALSEYGPN). Residues 288–296 (PREVGEKFH) form a short helix H1-2 region. Residues 298–304 (SLLEALS) are short helix H2-2. A helical membrane pass occupies residues 310–332 (YLAYFGSFVTIGLLWFVHHSLFL). Over 333–338 (YVTKAT) the chain is Cytoplasmic. Residues 339–360 (RLMGLLNILSLAFIGGLPLAYQ) traverse the membrane as a helical segment. The Lumenal portion of the chain corresponds to 361–375 (LTSEFAEKSHNEIEA). Residues 376–396 (IQVSCVITFFASIFQFAIWTT) traverse the membrane as a helical segment. Over 397–416 (ALLHERETLHPFARYGGKEH) the chain is Cytoplasmic. The helical transmembrane segment at 417-440 (AFMFAKLALYPCVSLGAFFLTCLL) threads the bilayer. The Lumenal segment spans residues 441–442 (SE). The helical transmembrane segment at 443-469 (FSTEIFHLMQIVIPFAFLALRIFVRIS) threads the bilayer. The Cytoplasmic portion of the chain corresponds to 470–501 (LTVIKSVMSLSRRKVVLLEEEEACLSPTETHS).

The protein belongs to the TMEM175 family. As to quaternary structure, homodimer.

It is found in the endosome membrane. Its subcellular location is the lysosome membrane. It catalyses the reaction H(+)(in) = H(+)(out). The catalysed reaction is K(+)(in) = K(+)(out). Active at low pH (under pH 4.6): proton channel activity is activated by luminal side protons. Polyunsaturated fatty acids, such as arachidonic acid, also activate the channel activity. Its function is as follows. Proton-activated proton channel that catalyzes proton efflux from endosomes and lysosomes to maintain a steady-state pH. Activated at low pH (under pH 4.6) by luminal side protons: selectively mediates lysosomal proton release from lysosomes, eliciting a proton leak that balances V-ATPase activity to maintain pH homeostasis. Regulation of lumenal pH stability is required for autophagosome-lysosome fusion. Also acts as a potassium channel at higher pH, regulating potassium conductance in endosomes and lysosomes. The sequence is that of Endosomal/lysosomal proton channel TMEM175 from Gallus gallus (Chicken).